The chain runs to 513 residues: Protein phosphatase 1H (513 aa).

Ser-7 bears the Phosphoserine mark. A PPM-type phosphatase domain is found at 77-506 (ATGYAEVINA…DDISVYVIPL (430 aa)). The tract at residues 109 to 133 (TITSTPNRNSKRRSSLPNGEGLQLK) is disordered. The residue at position 113 (Thr-113) is a Phosphothreonine. Residues Ser-123 and Ser-210 each carry the phosphoserine modification. Arg-212 carries the post-translational modification Omega-N-methylarginine. The residue at position 220 (Ser-220) is a Phosphoserine. Residue Thr-223 is modified to Phosphothreonine. Position 421 is a phosphoserine (Ser-421).

Belongs to the PP2C family.

The protein localises to the nucleus. It localises to the cytoplasm. It catalyses the reaction O-phospho-L-seryl-[protein] + H2O = L-seryl-[protein] + phosphate. The enzyme catalyses O-phospho-L-threonyl-[protein] + H2O = L-threonyl-[protein] + phosphate. Its function is as follows. Dephosphorylates CDKN1B at 'Thr-187', thus removing a signal for proteasomal degradation. The sequence is that of Protein phosphatase 1H (Ppm1h) from Mus musculus (Mouse).